A 674-amino-acid polypeptide reads, in one-letter code: DNA ligase (674 aa).

NAD(+) is bound by residues 34–38 (DFEFD), 83–84 (SL), and E117. K119 serves as the catalytic N6-AMP-lysine intermediate. Residues R140, E184, K297, and K321 each contribute to the NAD(+) site. C415, C418, C433, and C439 together coordinate Zn(2+). Residues 598 to 674 (LVNNNFEGQS…IDEDEFERML (77 aa)) enclose the BRCT domain.

This sequence belongs to the NAD-dependent DNA ligase family. LigA subfamily. The cofactor is Mg(2+). Mn(2+) serves as cofactor.

The enzyme catalyses NAD(+) + (deoxyribonucleotide)n-3'-hydroxyl + 5'-phospho-(deoxyribonucleotide)m = (deoxyribonucleotide)n+m + AMP + beta-nicotinamide D-nucleotide.. DNA ligase that catalyzes the formation of phosphodiester linkages between 5'-phosphoryl and 3'-hydroxyl groups in double-stranded DNA using NAD as a coenzyme and as the energy source for the reaction. It is essential for DNA replication and repair of damaged DNA. The polypeptide is DNA ligase (Chlorobaculum tepidum (strain ATCC 49652 / DSM 12025 / NBRC 103806 / TLS) (Chlorobium tepidum)).